Here is a 153-residue protein sequence, read N- to C-terminus: Insulin-like growth factor 1 (153 aa).

The segment at 49–77 (GPETLCGAELVDALQFVCGDRGFYFNKPT) is b. 3 cysteine pairs are disulfide-bonded: Cys-54–Cys-96, Cys-66–Cys-109, and Cys-95–Cys-100. Residues 78–89 (GYGSSSRRAPQT) form a c region. The a stretch occupies residues 90-110 (GIVDECCFRSCDLRRLEMYCA). Residues 111–118 (PLKPAKSA) are d. The propeptide at 119–153 (RSVRAQRHTDMPKAQKEVHLKNTSRGSSGNKNYRM) is e peptide. A disordered region spans residues 120–153 (SVRAQRHTDMPKAQKEVHLKNTSRGSSGNKNYRM). Over residues 125–138 (RHTDMPKAQKEVHL) the composition is skewed to basic and acidic residues. The segment covering 139-153 (KNTSRGSSGNKNYRM) has biased composition (polar residues).

The protein belongs to the insulin family. Forms a ternary complex with IGFR1 and ITGAV:ITGB3. Forms a ternary complex with IGFR1 and ITGA6:ITGB4. Forms a ternary complex with IGFBP3 and ALS.

It localises to the secreted. Its function is as follows. The insulin-like growth factors, isolated from plasma, are structurally and functionally related to insulin but have a much higher growth-promoting activity. May be a physiological regulator of [1-14C]-2-deoxy-D-glucose (2DG) transport and glycogen synthesis in osteoblasts. Stimulates glucose transport in bone-derived osteoblastic (PyMS) cells and is effective at much lower concentrations than insulin, not only regarding glycogen and DNA synthesis but also with regard to enhancing glucose uptake. May play a role in synapse maturation. Ca(2+)-dependent exocytosis of IGF1 is required for sensory perception of smell in the olfactory bulb. Acts as a ligand for IGF1R. Binds to the alpha subunit of IGF1R, leading to the activation of the intrinsic tyrosine kinase activity which autophosphorylates tyrosine residues in the beta subunit thus initiating a cascade of down-stream signaling events leading to activation of the PI3K-AKT/PKB and the Ras-MAPK pathways. Binds to integrins ITGAV:ITGB3 and ITGA6:ITGB4. Its binding to integrins and subsequent ternary complex formation with integrins and IGFR1 are essential for IGF1 signaling. Induces the phosphorylation and activation of IGFR1, MAPK3/ERK1, MAPK1/ERK2 and AKT1. As part of the MAPK/ERK signaling pathway, acts as a negative regulator of apoptosis in cardiomyocytes via promotion of STUB1/CHIP-mediated ubiquitination and degradation of ICER-type isoforms of CREM. The chain is Insulin-like growth factor 1 from Sus scrofa (Pig).